Here is a 238-residue protein sequence, read N- to C-terminus: EKC/KEOPS complex subunit SPAP27G11.07c (238 aa).

The Protein kinase domain maps to 20–238; it reads EKKLTVVKQG…MRGRKRTMIG (219 aa). ATP is bound by residues 26–34 and K48; that span reads VKQGAEAIT. Catalysis depends on D148, which acts as the Proton acceptor.

The protein belongs to the protein kinase superfamily. BUD32 family. In terms of assembly, component of the EKC/KEOPS complex composed of at least SPAP27G11.07c/BUD32, cgi121, gon7, pgp2 and SPAC4H3.13/PCC1; the whole complex dimerizes.

The protein resides in the cytoplasm. Its subcellular location is the nucleus. It is found in the chromosome. The protein localises to the telomere. It catalyses the reaction L-seryl-[protein] + ATP = O-phospho-L-seryl-[protein] + ADP + H(+). The enzyme catalyses L-threonyl-[protein] + ATP = O-phospho-L-threonyl-[protein] + ADP + H(+). Component of the EKC/KEOPS complex that is required for the formation of a threonylcarbamoyl group on adenosine at position 37 (t(6)A37) in tRNAs that read codons beginning with adenine. The complex is probably involved in the transfer of the threonylcarbamoyl moiety of threonylcarbamoyl-AMP (TC-AMP) to the N6 group of A37. BUD32 has ATPase activity in the context of the EKC/KEOPS complex and likely plays a supporting role to the catalytic subunit KAE1. The EKC/KEOPS complex also promotes both telomere uncapping and telomere elongation. The complex is required for efficient recruitment of transcriptional coactivators. This is EKC/KEOPS complex subunit SPAP27G11.07c from Schizosaccharomyces pombe (strain 972 / ATCC 24843) (Fission yeast).